The following is a 75-amino-acid chain: ATP synthase subunit c (75 aa).

A run of 2 helical transmembrane segments spans residues 9-29 and 52-72; these read IGAG…GNIW and IGFA…LILL.

The protein belongs to the ATPase C chain family. In terms of assembly, F-type ATPases have 2 components, F(1) - the catalytic core - and F(0) - the membrane proton channel. F(1) has five subunits: alpha(3), beta(3), gamma(1), delta(1), epsilon(1). F(0) has four main subunits: a(1), b(1), b'(1) and c(10-14). The alpha and beta chains form an alternating ring which encloses part of the gamma chain. F(1) is attached to F(0) by a central stalk formed by the gamma and epsilon chains, while a peripheral stalk is formed by the delta, b and b' chains.

Its subcellular location is the cell inner membrane. F(1)F(0) ATP synthase produces ATP from ADP in the presence of a proton or sodium gradient. F-type ATPases consist of two structural domains, F(1) containing the extramembraneous catalytic core and F(0) containing the membrane proton channel, linked together by a central stalk and a peripheral stalk. During catalysis, ATP synthesis in the catalytic domain of F(1) is coupled via a rotary mechanism of the central stalk subunits to proton translocation. Functionally, key component of the F(0) channel; it plays a direct role in translocation across the membrane. A homomeric c-ring of between 10-14 subunits forms the central stalk rotor element with the F(1) delta and epsilon subunits. This Rhodospirillum rubrum (strain ATCC 11170 / ATH 1.1.1 / DSM 467 / LMG 4362 / NCIMB 8255 / S1) protein is ATP synthase subunit c.